We begin with the raw amino-acid sequence, 255 residues long: EEF1A lysine methyltransferase 4 (255 aa).

Positions 26 and 30 each coordinate S-adenosyl-L-methionine. At Tyr-39 the chain carries Phosphotyrosine. Residues Trp-41, Gly-66, 88-89 (DY), 113-114 (DV), and Lys-130 contribute to the S-adenosyl-L-methionine site. The Required for methyltransferase activity motif lies at 129–134 (EKGTLD).

This sequence belongs to the methyltransferase superfamily.

It carries out the reaction L-lysyl-[protein] + S-adenosyl-L-methionine = N(6)-methyl-L-lysyl-[protein] + S-adenosyl-L-homocysteine + H(+). The catalysed reaction is N(6)-methyl-L-lysyl-[protein] + S-adenosyl-L-methionine = N(6),N(6)-dimethyl-L-lysyl-[protein] + S-adenosyl-L-homocysteine + H(+). The enzyme catalyses N(6),N(6)-dimethyl-L-lysyl-[protein] + S-adenosyl-L-methionine = N(6),N(6),N(6)-trimethyl-L-lysyl-[protein] + S-adenosyl-L-homocysteine + H(+). Its function is as follows. Protein-lysine methyltransferase that efficiently catalyzes three successive methylations on 'Lys-36' in eukaryotic translation elongation factor 1 alpha (EEF1A1 or EEF1A2). This Homo sapiens (Human) protein is EEF1A lysine methyltransferase 4.